The chain runs to 193 residues: Acyl carrier protein phosphodiesterase (193 aa).

The protein belongs to the AcpH family.

It carries out the reaction holo-[ACP] + H2O = apo-[ACP] + (R)-4'-phosphopantetheine + H(+). Converts holo-ACP to apo-ACP by hydrolytic cleavage of the phosphopantetheine prosthetic group from ACP. In Enterobacter sp. (strain 638), this protein is Acyl carrier protein phosphodiesterase.